The following is a 210-amino-acid chain: Large ribosomal subunit protein uL3 (210 aa).

The protein belongs to the universal ribosomal protein uL3 family. Part of the 50S ribosomal subunit. Forms a cluster with proteins L14 and L19.

One of the primary rRNA binding proteins, it binds directly near the 3'-end of the 23S rRNA, where it nucleates assembly of the 50S subunit. In Solibacter usitatus (strain Ellin6076), this protein is Large ribosomal subunit protein uL3.